A 348-amino-acid chain; its full sequence is NADH-quinone oxidoreductase subunit H (348 aa).

Transmembrane regions (helical) follow at residues 25 to 45 (ILFLVGQALVIFLVVVIVAAL), 95 to 115 (FMFILAPAVAMFTALASFAII), 128 to 148 (IGILFFFAMAGMAVYAVMFGG), 168 to 188 (ISYEVFLGLSLMGVVAMTGSF), 204 to 224 (WNIFPQFLGFLTFVVAGVAVT), 254 to 274 (FFIGEYVNVVLISALMTCLFF), 287 to 307 (ILPPAFWFMIKTLFFMTMFVL), and 327 to 347 (VCLPVTLINLMITAALILISA).

Belongs to the complex I subunit 1 family. In terms of assembly, NDH-1 is composed of 14 different subunits. Subunits NuoA, H, J, K, L, M, N constitute the membrane sector of the complex.

It is found in the cell inner membrane. The enzyme catalyses a quinone + NADH + 5 H(+)(in) = a quinol + NAD(+) + 4 H(+)(out). NDH-1 shuttles electrons from NADH, via FMN and iron-sulfur (Fe-S) centers, to quinones in the respiratory chain. The immediate electron acceptor for the enzyme in this species is believed to be ubiquinone. Couples the redox reaction to proton translocation (for every two electrons transferred, four hydrogen ions are translocated across the cytoplasmic membrane), and thus conserves the redox energy in a proton gradient. This subunit may bind ubiquinone. This is NADH-quinone oxidoreductase subunit H from Psychrobacter sp. (strain PRwf-1).